A 313-amino-acid polypeptide reads, in one-letter code: Porphobilinogen deaminase 2 (313 aa).

Cys246 carries the post-translational modification S-(dipyrrolylmethanemethyl)cysteine.

It belongs to the HMBS family. Monomer. Dipyrromethane is required as a cofactor.

It carries out the reaction 4 porphobilinogen + H2O = hydroxymethylbilane + 4 NH4(+). The protein operates within porphyrin-containing compound metabolism; protoporphyrin-IX biosynthesis; coproporphyrinogen-III from 5-aminolevulinate: step 2/4. In terms of biological role, tetrapolymerization of the monopyrrole PBG into the hydroxymethylbilane pre-uroporphyrinogen in several discrete steps. This chain is Porphobilinogen deaminase 2 (hemC2), found in Streptomyces coelicolor (strain ATCC BAA-471 / A3(2) / M145).